Here is a 291-residue protein sequence, read N- to C-terminus: Sulfate transport system permease protein CysW (291 aa).

At 1–22 the chain is on the cytoplasmic side; that stretch reads MAEVTQLKRYDARPINWGKWFL. A helical transmembrane segment spans residues 23 to 43; the sequence is IGIGMLVSAFILLVPMIYIFV. Residues 44–69 are Periplasmic-facing; it reads QAFSKGLMPVLQNLADPDMLHAIWLT. Positions 66 to 270 constitute an ABC transmembrane type-1 domain; the sequence is IWLTVMIALI…MAIITLFLKS (205 aa). Residues 70–90 form a helical membrane-spanning segment; it reads VMIALIAVPVNLVFGILLAWL. Over 91 to 104 the chain is Cytoplasmic; sequence VTRFNFPGRQLLLT. Residues 105 to 125 form a helical membrane-spanning segment; it reads LLDIPFAVSPVVAGLVYLLFY. Topologically, residues 126 to 141 are periplasmic; it reads GSNGPLGGWLDEHNLQ. The chain crosses the membrane as a helical span at residues 142–162; sequence IMFSWPGMVLVTIFVTCPFVV. At 163–200 the chain is on the cytoplasmic side; it reads RELVPVMLSQGSQEDEAAILLGASGWQMFRRVTLPNIR. Residues 201-221 form a helical membrane-spanning segment; it reads WALLYGVVLTNARAIGEFGAV. The Periplasmic segment spans residues 222 to 247; it reads SVVSGSIRGETLSLPLQIELLEQDYN. The helical transmembrane segment at 248–268 threads the bilayer; the sequence is TVGSFTAAALLTLMAIITLFL. Over 269–291 the chain is Cytoplasmic; it reads KSMLQWRLENQEKRAQQEEHHEH.

This sequence belongs to the binding-protein-dependent transport system permease family. CysTW subfamily. The complex is composed of two ATP-binding proteins (CysA), two transmembrane proteins (CysT and CysW) and a solute-binding protein (CysP).

It localises to the cell inner membrane. In terms of biological role, part of the ABC transporter complex CysAWTP (TC 3.A.1.6.1) involved in sulfate/thiosulfate import. Probably responsible for the translocation of the substrate across the membrane. The polypeptide is Sulfate transport system permease protein CysW (cysW) (Escherichia coli O6:H1 (strain CFT073 / ATCC 700928 / UPEC)).